A 163-amino-acid chain; its full sequence is Photosystem II extrinsic protein V (163 aa).

The signal sequence occupies residues 1 to 26 (MLKRSSWLATLLGLLTVASVSTIVYA). The heme c site is built by C63, C66, H67, and H118.

It belongs to the cytochrome c family. PsbV subfamily. In terms of assembly, PSII is composed of 1 copy each of membrane proteins PsbA, PsbB, PsbC, PsbD, PsbE, PsbF, PsbH, PsbI, PsbJ, PsbK, PsbL, PsbM, PsbT, PsbY, PsbZ, Psb30/Ycf12, at least 3 peripheral proteins of the oxygen-evolving complex and a large number of cofactors. It forms dimeric complexes. The extrinsic subunits in red algae are PsbO (OEC33), PsbQ', cytochrome c-550 and PsbU. Heme c is required as a cofactor.

The protein localises to the plastid. It localises to the chloroplast thylakoid membrane. One of the extrinsic, lumenal subunits of photosystem II (PSII). PSII is a light-driven water plastoquinone oxidoreductase, using light energy to abstract electrons from H(2)O, generating a proton gradient subsequently used for ATP formation. The extrinsic proteins stabilize the structure of photosystem II oxygen-evolving complex (OEC), the ion environment of oxygen evolution and protect the OEC against heat-induced inactivation. This is Photosystem II extrinsic protein V from Porphyra purpurea (Red seaweed).